Reading from the N-terminus, the 105-residue chain is Blood plasma apolipoprotein LAL1 (105 aa).

An N-terminal signal peptide occupies residues 1 to 21 (MKLHVAALATLAVVCILAAGS). A propeptide spanning residues 22 to 29 (EAAPKAMS) is cleaved from the precursor.

As to expression, plasma.

The protein resides in the secreted. The chain is Blood plasma apolipoprotein LAL1 from Petromyzon marinus (Sea lamprey).